Here is a 340-residue protein sequence, read N- to C-terminus: Putative RRN3-like protein RRN3P2 (340 aa).

It belongs to the RRN3 family.

This Homo sapiens (Human) protein is Putative RRN3-like protein RRN3P2 (RRN3P2).